We begin with the raw amino-acid sequence, 526 residues long: Tyrosine 2,3-aminomutase (526 aa).

Tyr-41 functions as the Proton donor/acceptor in the catalytic mechanism. His-71 is a binding site for substrate. The segment at residues 130–132 is a cross-link (5-imidazolinone (Ala-Gly)); that stretch reads ASG. 2,3-didehydroalanine (Ser) is present on Ser-131. Substrate is bound by residues Asn-183 and Arg-288.

This sequence belongs to the TAL/TAM family. As to quaternary structure, homotetramer; dimer of dimers. In terms of processing, contains an active site 4-methylidene-imidazol-5-one (MIO), which is formed autocatalytically by cyclization and dehydration of residues Ala-Ser-Gly.

It catalyses the reaction L-tyrosine = 3-amino-3-(4-hydroxyphenyl)propanoate. The enzyme catalyses L-tyrosine = (E)-4-coumarate + NH4(+). Functionally, has aminomutase and, to a much lesser extent, ammonia-lyase activity. Primarily, catalyzes the rearrangement of L-tyrosine to S-beta-tyrosine, which is probably incorporated into secondary metabolite myxovalargin. The aminomutase activity exclusively produces S-beta-tyrosine. This is Tyrosine 2,3-aminomutase from Myxococcus fulvus.